A 206-amino-acid chain; its full sequence is MARYLGPKLKLSRREGTDLFLKSGVRAIDSKCKIDTAPGQHGARRGRLSDYGVQLREKQKVRRMYGVLEKQFRNYYKEAARLKGNTGENLLQLLEQRLDNVVYRMGFASTRAEARQLVSHKAIMVNGQVVNIPSFNVSAEDVVSVREKAKKQARIVAALELADQREKPTWIEVDSSKMEGTFKRVPERTDLSAEINEQLIVELYSK.

Residues 96–156 (QRLDNVVYRM…EKAKKQARIV (61 aa)) form the S4 RNA-binding domain.

The protein belongs to the universal ribosomal protein uS4 family. Part of the 30S ribosomal subunit. Contacts protein S5. The interaction surface between S4 and S5 is involved in control of translational fidelity.

One of the primary rRNA binding proteins, it binds directly to 16S rRNA where it nucleates assembly of the body of the 30S subunit. In terms of biological role, with S5 and S12 plays an important role in translational accuracy. This is Small ribosomal subunit protein uS4 from Alteromonas mediterranea (strain DSM 17117 / CIP 110805 / LMG 28347 / Deep ecotype).